The following is a 761-amino-acid chain: Signal transducer and transcription activator (761 aa).

Residues 594 to 658 enclose the SH2 domain; that stretch reads WKAGCIMGFI…APWTARDFQV (65 aa). Y711 carries the phosphotyrosine; by JAK modification.

This sequence belongs to the transcription factor STAT family. As to quaternary structure, forms a homodimer or a heterodimer with a related family member. Tyrosine phosphorylated by hopscotch. Phosphorylation is required for DNA-binding activity and dimerization.

It is found in the cytoplasm. Its subcellular location is the nucleus. Functionally, might play a role in signal transduction and activation of transcription. Plays an important role in the segmental pattern formation in the early embryo by activating specific stripes of pair rule gene expression in early development as part of the Janus kinase-STAT pathway. Might play a role in male germline stem cell maintenance. The sequence is that of Signal transducer and transcription activator (Stat92E) from Drosophila melanogaster (Fruit fly).